Here is a 107-residue protein sequence, read N- to C-terminus: Ig kappa chain V-VI region XRPC 24 (107 aa).

Residues 1-23 form a framework-1 region; sequence EIVLTQSPAITAASLGQKVTITC. A disulfide bridge connects residues Cys23 and Cys87. A complementarity-determining-1 region spans residues 24-33; sequence SASSSVSYMH. Residues 34–48 are framework-2; it reads WYQQKSGTSPKPWIY. The complementarity-determining-2 stretch occupies residues 49–55; it reads EISKLAS. A framework-3 region spans residues 56–87; that stretch reads GVPARFSGSGSGTSYSLTISSMEAEDAAIYYC. Residues 88 to 96 form a complementarity-determining-3 region; the sequence is QQWNYPLIT. The tract at residues 97–106 is framework-4; that stretch reads FGSGTKLEIK.

The sequence is that of Ig kappa chain V-VI region XRPC 24 from Mus musculus (Mouse).